The primary structure comprises 245 residues: 2,3-bisphosphoglycerate-dependent phosphoglycerate mutase (245 aa).

Residues 8–15 (RHGQSLWN), 21–22 (TG), Arg60, 87–90 (ERHY), Lys98, 114–115 (RR), and 183–184 (GN) each bind substrate. His9 acts as the Tele-phosphohistidine intermediate in catalysis. Glu87 functions as the Proton donor/acceptor in the catalytic mechanism.

The protein belongs to the phosphoglycerate mutase family. BPG-dependent PGAM subfamily.

It catalyses the reaction (2R)-2-phosphoglycerate = (2R)-3-phosphoglycerate. The protein operates within carbohydrate degradation; glycolysis; pyruvate from D-glyceraldehyde 3-phosphate: step 3/5. In terms of biological role, catalyzes the interconversion of 2-phosphoglycerate and 3-phosphoglycerate. The chain is 2,3-bisphosphoglycerate-dependent phosphoglycerate mutase from Bacillus cereus (strain AH187).